Reading from the N-terminus, the 354-residue chain is MTMKQFEIAAIPGDGVGKEVVAAAEKVLHTAAEVHGGLSFSFTAFPWSCDYYLEHGKMMPEDGIHTLTQFEAVFLGAVGNPKLVPDHISLWGLLLKIRRELELSINMRPAKQMAGITSPLLHPNDFDFVVIRENSEGEYSEVGGRIHRGDDEIAIQNAVFTRKATERVMRFAFELAKKRRSHVTSATKSNGIYHAMPFWDEVFQQTAADYSGIETSSQHIDALAAFFVTRPETFDVIVASNLFGDILTDISSSLMGSIGIAPSANINPSGKYPSMFEPVHGSAPDIAGQGLANPIGQIWTAKLMLDHFGEEELGAKILDVMEQVTADGIKTRDIGGQSTTAEVTDEICSRLRKL.

Residues D221, D245, and D249 each coordinate Mn(2+).

It belongs to the isocitrate and isopropylmalate dehydrogenases family. It depends on Mg(2+) as a cofactor. The cofactor is Mn(2+). K(+) serves as cofactor.

The enzyme catalyses tartrate + NAD(+) = 2-hydroxy-3-oxosuccinate + NADH + H(+). The catalysed reaction is (2R,3S)-tartrate + NAD(+) = 2-hydroxy-3-oxosuccinate + NADH + H(+). It carries out the reaction (2R,3R)-tartrate + NAD(+) = 2-hydroxy-3-oxosuccinate + NADH + H(+). It catalyses the reaction (2R,3R)-tartrate + H(+) = (R)-glycerate + CO2. The enzyme catalyses (R)-malate + NAD(+) = pyruvate + CO2 + NADH. Functionally, has multiple catalytic activities. Apart from catalyzing the oxidation of (+)-tartrate to oxaloglycolate, also converts meso-tartrate to D-glycerate and catalyzes the oxidative decarboxylation of D-malate to pyruvate. This is Probable tartrate dehydrogenase/decarboxylase (ycsA) from Bacillus subtilis (strain 168).